Reading from the N-terminus, the 239-residue chain is MPRKHLIANQTNKKQQTSAKQLQKLAKRIASAVKKGGTNIQSNPHLKVAVDLALAKGLSMDSIKRNIHGSEKDTTKISEFCYEIFGPNGVGIIVFGLTDNPNRLLSSLNGYLAKLKGQLAKPNSVKINFQEEGIIFVNKNNYLKDDLIELLILDNINLIDVDYDEECFEISLHSNSYFHAKELLKKNNFSIVDSEIKLVPLLTVDLDRNQQTLLSRFLNACEEDDDIQFVVHNANPWEE.

It belongs to the TACO1 family.

It is found in the cytoplasm. In Mycoplasma genitalium (strain ATCC 33530 / DSM 19775 / NCTC 10195 / G37) (Mycoplasmoides genitalium), this protein is Probable transcriptional regulatory protein MG332.